A 393-amino-acid chain; its full sequence is Acetylornithine aminotransferase 1 (393 aa).

Arg-131 is a N(2)-acetyl-L-ornithine binding site. 215–218 (DEVQ) lines the pyridoxal 5'-phosphate pocket. At Lys-244 the chain carries N6-(pyridoxal phosphate)lysine. Residue Thr-272 participates in N(2)-acetyl-L-ornithine binding. Residue Thr-273 coordinates pyridoxal 5'-phosphate.

Belongs to the class-III pyridoxal-phosphate-dependent aminotransferase family. ArgD subfamily. Homodimer. It depends on pyridoxal 5'-phosphate as a cofactor.

The protein resides in the cytoplasm. The catalysed reaction is N(2)-acetyl-L-ornithine + 2-oxoglutarate = N-acetyl-L-glutamate 5-semialdehyde + L-glutamate. It participates in amino-acid biosynthesis; L-arginine biosynthesis; N(2)-acetyl-L-ornithine from L-glutamate: step 4/4. This Bordetella pertussis (strain Tohama I / ATCC BAA-589 / NCTC 13251) protein is Acetylornithine aminotransferase 1.